The chain runs to 325 residues: NADH-quinone oxidoreductase subunit H (325 aa).

Transmembrane regions (helical) follow at residues 11–31 (ILISIVKAVVILLVVVTCGAF), 81–101 (VIFTLAPMIAFTSLLLAFAIV), 114–134 (IGILFFLMMAGLAVYAVLFAG), 149–169 (ASAQTLSYEVFIGLSLMGVVA), 186–206 (MWNVIPQFFGFITFAIAGVAV), 237–257 (FFVGEYIGIVTVSALIVTLFF), 265–285 (LPPFVWFALKTAFFMMMFILI), and 304–324 (VCLPLTLLNLLATAAVILYNA).

It belongs to the complex I subunit 1 family. As to quaternary structure, NDH-1 is composed of 13 different subunits. Subunits NuoA, H, J, K, L, M, N constitute the membrane sector of the complex.

The protein localises to the cell inner membrane. It carries out the reaction a quinone + NADH + 5 H(+)(in) = a quinol + NAD(+) + 4 H(+)(out). Its function is as follows. NDH-1 shuttles electrons from NADH, via FMN and iron-sulfur (Fe-S) centers, to quinones in the respiratory chain. The immediate electron acceptor for the enzyme in this species is believed to be ubiquinone. Couples the redox reaction to proton translocation (for every two electrons transferred, four hydrogen ions are translocated across the cytoplasmic membrane), and thus conserves the redox energy in a proton gradient. This subunit may bind ubiquinone. The chain is NADH-quinone oxidoreductase subunit H from Serratia proteamaculans (strain 568).